A 270-amino-acid chain; its full sequence is Tryptophan synthase alpha chain (270 aa).

Residues Glu-49 and Asp-60 each act as proton acceptor in the active site.

This sequence belongs to the TrpA family. In terms of assembly, tetramer of two alpha and two beta chains.

The enzyme catalyses (1S,2R)-1-C-(indol-3-yl)glycerol 3-phosphate + L-serine = D-glyceraldehyde 3-phosphate + L-tryptophan + H2O. Its pathway is amino-acid biosynthesis; L-tryptophan biosynthesis; L-tryptophan from chorismate: step 5/5. Functionally, the alpha subunit is responsible for the aldol cleavage of indoleglycerol phosphate to indole and glyceraldehyde 3-phosphate. This is Tryptophan synthase alpha chain from Pseudomonas fluorescens (strain Pf0-1).